Consider the following 29-residue polypeptide: Cyclotide vibi-C (29 aa).

Positions 1-29 (GLPVCGETCAFGSCYTPGCSCSWPVCTRN) form a cross-link, cyclopeptide (Gly-Asn). 3 disulfide bridges follow: Cys5–Cys19, Cys9–Cys21, and Cys14–Cys26.

This is a cyclic peptide.

In terms of biological role, probably participates in a plant defense mechanism. The chain is Cyclotide vibi-C from Viola biflora (Yellow wood violet).